The chain runs to 2393 residues: Leucine-rich repeat serine/threonine-protein kinase 1 (2393 aa).

10 ANK repeats span residues 56–86 (HGRTPLMLAAHNGKLDSLRTILMLSPNSLNL), 90–120 (RGKTALHMAAESGETSIVLELVELGSDPMKS), 123–152 (EGHCALELAQMAGHNEVAAKLIDAIQKESE), 197–226 (EDETALLIACTNGHIEIVRHLLQFEEHLLQ), 230–259 (SKDTVIHAAVSSQNVEVLQLCLEKFPQLVK), 264–293 (EGSTCLHWAARCGSSECVSTILNFPFPSEF), 317–347 (ECRTAMYLAVAEGHLEVVKAMTDFKCTSIDG), 361–390 (RGRTPFMLAAFNQNLPLMTLLLDAGADVNL), 407–437 (IGSGALVEAVRSDGLHIVHFLLDRGALDTDN), and 439–464 (ALRLAAQGKNEKLIRVFLVRLVFADP). LRR repeat units lie at residues 532-553 (AITRVDLSDNRLNTFPSILFQM), 555-576 (SLRSLNLADNSIRKIEIPTYYI), 580-600 (SLEILNLRNNQLECIAIQFLS), 604-625 (QLQQLDVSKNELSQLPEYIWLC), and 627-648 (ALKELNASYNRLSTLPMVARAS). The disordered stretch occupies residues 649–675 (RGERPRLNNSNNNFNTQSPTQESNPIV). LRR repeat units follow at residues 718 to 739 (TLTTINLSFNKFHTFPFCLACT), 742 to 763 (RLLILNMSNNSMTSLPPMACVP), and 765 to 787 (HLRTLDLSYNKIQESFIEASPLH). The disordered stretch occupies residues 797 to 844 (TSNGSMLPKRRNSPARQHRSRSKSAVRSQRSLSVSRHHALIDPQKEEE). The segment covering 804–820 (PKRRNSPARQHRSRSKS) has biased composition (basic residues). A compositionally biased stretch (polar residues) spans 821–830 (AVRSQRSLSV). Residues 835-844 (ALIDPQKEEE) are compositionally biased toward basic and acidic residues. LRR repeat units lie at residues 856–877 (WLKTLQLAGNRLRSISVTNAAS), 883–905 (ALNVMDISDNKLLQAPPDVARLT), 906–928 (LLSMLNLSGNTAIKELPPDYGML), and 930–952 (RLWSLSLKGCSLKEPLESMVNVE). The Roc domain maps to 969–1167 (ESKTYHHLRL…NTIYRTAWEV (199 aa)). GTP-binding positions include 982 to 989 (GSDGVGKS), 1040 to 1044 (DFGGQ), and 1098 to 1101 (TNLD). Positions 1233–1422 (FYAACTFLHD…GFWSRLVTRI (190 aa)) constitute a COR domain. Disordered regions lie at residues 1361-1382 (CPSPAGSPTKSPLRRTSPTDQN) and 1596-1633 (RNGSRSRTSSSASHRRSQDDGELPITSSSHMKGSRTTG). Composition is skewed to polar residues over residues 1366 to 1382 (GSPTKSPLRRTSPTDQN) and 1620 to 1633 (ITSSSHMKGSRTTG). The region spanning 1694-1992 (LKRSRMLGRG…LVGFCAAPEF (299 aa)) is the Protein kinase domain. ATP contacts are provided by residues 1700 to 1708 (LGRGAFGFV) and K1726. The active-site Proton acceptor is the D1847.

It belongs to the protein kinase superfamily. TKL Ser/Thr protein kinase family. ROCO subfamily. It depends on Mg(2+) as a cofactor. Requires Mn(2+) as cofactor. Expressed in cell bodies, but not in dendritic or axonal processes, of adult head neurons. Also present in non-neuronal tissues, such as the body wall musculature and the epithelial cells of the nematode vulva.

The protein localises to the golgi apparatus. It carries out the reaction L-seryl-[protein] + ATP = O-phospho-L-seryl-[protein] + ADP + H(+). The enzyme catalyses L-threonyl-[protein] + ATP = O-phospho-L-threonyl-[protein] + ADP + H(+). In terms of biological role, determines polarized sorting of synaptic vesicle (SV) proteins to the axons by excluding SV proteins from the dendrite-specific transport machinery in the Golgi. Role in stress response. Appears to antagonize the effects of pink-1 both in the regulation of axon guidance and stress response. This chain is Leucine-rich repeat serine/threonine-protein kinase 1 (lrk-1), found in Caenorhabditis elegans.